Here is a 975-residue protein sequence, read N- to C-terminus: Monofunctional C1-tetrahydrofolate synthase, mitochondrial (975 aa).

The N-terminal 30 residues, 1 to 30 (MSARLPFVLRRLARPQHPGSPRRLPSLCRA), are a transit peptide targeting the mitochondrion. The disordered stretch occupies residues 13–45 (ARPQHPGSPRRLPSLCRASSGRGSGCGGGEGLL). A methylenetetrahydrofolate dehydrogenase and cyclohydrolase region spans residues 31-345 (SSGRGSGCGG…REQQHRRWRL (315 aa)). A compositionally biased stretch (gly residues) spans 34–44 (RGSGCGGGEGL). An N6-acetyllysine; alternate modification is found at Lys187. At Lys187 the chain carries N6-succinyllysine; alternate. The segment at 346–975 (HCLKLQPLSP…TETEQVKGLF (630 aa)) is formyltetrahydrofolate synthetase. Ser354 is subject to Phosphoserine. Residue 420 to 427 (TPLGEGKS) participates in ATP binding. Position 593 is an N6-succinyllysine (Lys593).

It in the N-terminal section; belongs to the tetrahydrofolate dehydrogenase/cyclohydrolase family. This sequence in the C-terminal section; belongs to the formate--tetrahydrofolate ligase family. Homodimer.

The protein resides in the mitochondrion. It carries out the reaction (6S)-5,6,7,8-tetrahydrofolate + formate + ATP = (6R)-10-formyltetrahydrofolate + ADP + phosphate. The protein operates within one-carbon metabolism; tetrahydrofolate interconversion. Its function is as follows. May provide the missing metabolic reaction required to link the mitochondria and the cytoplasm in the mammalian model of one-carbon folate metabolism complementing thus the enzymatic activities of MTHFD2. The protein is Monofunctional C1-tetrahydrofolate synthase, mitochondrial (MTHFD1L) of Bos taurus (Bovine).